The sequence spans 450 residues: Chitobiosyldiphosphodolichol beta-mannosyltransferase (450 aa).

The Lumenal segment spans residues 1-13 (MSWIQIPWSWVVT). Residues 14 to 34 (LIVTYLSLPLIIYYLVPYIFY) form a helical membrane-spanning segment. At 35–106 (GNKSSKKRII…PTLTLQGNKR (72 aa)) the chain is on the cytoplasmic side. An intramembrane region (helical) is located at residues 107 to 127 (SIIFLVKKVLFQVSAIIAQLW). Over 128–450 (ELRGSNYMLI…SAMQELKLVA (323 aa)) the chain is Cytoplasmic.

This sequence belongs to the glycosyltransferase group 1 family.

The protein resides in the endoplasmic reticulum membrane. It carries out the reaction an N,N'-diacetylchitobiosyl-diphospho-di-trans,poly-cis-dolichol + GDP-alpha-D-mannose = a beta-D-Man-(1-&gt;4)-beta-D-GlcNAc-(1-&gt;4)-alpha-D-GlcNAc-diphospho-di-trans,poly-cis-dolichol + GDP + H(+). Its pathway is protein modification; protein glycosylation. Functionally, participates in the formation of the lipid-linked precursor oligosaccharide for N-glycosylation. Involved in assembling the dolichol-pyrophosphate-GlcNAc(2)-Man(5) intermediate on the cytoplasmic surface of the ER. The chain is Chitobiosyldiphosphodolichol beta-mannosyltransferase (ALG1) from Candida glabrata (strain ATCC 2001 / BCRC 20586 / JCM 3761 / NBRC 0622 / NRRL Y-65 / CBS 138) (Yeast).